The following is a 400-amino-acid chain: Probable S-adenosylmethionine synthase (400 aa).

135-140 lines the ATP pocket; it reads KPGSKD.

Belongs to the AdoMet synthase 2 family. Mg(2+) is required as a cofactor.

The catalysed reaction is L-methionine + ATP + H2O = S-adenosyl-L-methionine + phosphate + diphosphate. It functions in the pathway amino-acid biosynthesis; S-adenosyl-L-methionine biosynthesis; S-adenosyl-L-methionine from L-methionine: step 1/1. Catalyzes the formation of S-adenosylmethionine from methionine and ATP. The polypeptide is Probable S-adenosylmethionine synthase (mat) (Aquifex aeolicus (strain VF5)).